Consider the following 95-residue polypeptide: Co-chaperonin GroES (95 aa).

Belongs to the GroES chaperonin family. In terms of assembly, heptamer of 7 subunits arranged in a ring. Interacts with the chaperonin GroEL.

It is found in the cytoplasm. Together with the chaperonin GroEL, plays an essential role in assisting protein folding. The GroEL-GroES system forms a nano-cage that allows encapsulation of the non-native substrate proteins and provides a physical environment optimized to promote and accelerate protein folding. GroES binds to the apical surface of the GroEL ring, thereby capping the opening of the GroEL channel. The sequence is that of Co-chaperonin GroES from Xanthomonas axonopodis pv. citri (strain 306).